We begin with the raw amino-acid sequence, 130 residues long: Small ribosomal subunit protein uS9 (130 aa).

The protein belongs to the universal ribosomal protein uS9 family.

The sequence is that of Small ribosomal subunit protein uS9 from Cupriavidus metallidurans (strain ATCC 43123 / DSM 2839 / NBRC 102507 / CH34) (Ralstonia metallidurans).